Reading from the N-terminus, the 285-residue chain is Nucleotide-binding protein PSPPH_4154 (285 aa).

8–15 (GRSGSGKS) contributes to the ATP binding site. 60-63 (DARN) serves as a coordination point for GTP.

The protein belongs to the RapZ-like family.

Displays ATPase and GTPase activities. This Pseudomonas savastanoi pv. phaseolicola (strain 1448A / Race 6) (Pseudomonas syringae pv. phaseolicola (strain 1448A / Race 6)) protein is Nucleotide-binding protein PSPPH_4154.